A 524-amino-acid polypeptide reads, in one-letter code: 2-isopropylmalate synthase (524 aa).

Residues 5–267 (VIIFDTTLRD…HTNIRHSEIH (263 aa)) form the Pyruvate carboxyltransferase domain. Positions 14, 202, 204, and 238 each coordinate Mn(2+). The tract at residues 392 to 524 (KLEYLGVQSG…KTDKINTESV (133 aa)) is regulatory domain.

The protein belongs to the alpha-IPM synthase/homocitrate synthase family. LeuA type 1 subfamily. Homodimer. The cofactor is Mn(2+).

It localises to the cytoplasm. It catalyses the reaction 3-methyl-2-oxobutanoate + acetyl-CoA + H2O = (2S)-2-isopropylmalate + CoA + H(+). Its pathway is amino-acid biosynthesis; L-leucine biosynthesis; L-leucine from 3-methyl-2-oxobutanoate: step 1/4. Its function is as follows. Catalyzes the condensation of the acetyl group of acetyl-CoA with 3-methyl-2-oxobutanoate (2-ketoisovalerate) to form 3-carboxy-3-hydroxy-4-methylpentanoate (2-isopropylmalate). This Aeromonas hydrophila subsp. hydrophila (strain ATCC 7966 / DSM 30187 / BCRC 13018 / CCUG 14551 / JCM 1027 / KCTC 2358 / NCIMB 9240 / NCTC 8049) protein is 2-isopropylmalate synthase.